A 425-amino-acid polypeptide reads, in one-letter code: MLDQRLVRENPELMARELARRGLTVDLNSLQALAQQQRDLEEQRSSLQAEGNRVGKEVGLKIKAGADPKGSDVAELRQQGNAIKQKVAVLEDEERQLAAELKTQLLTFPNLPSPACPDGRDENDNIEVRSWGDPRRQEGLDEHWAIADRLGLLDSERSVRIAQSRFVTLFGQGARLERALINFMLDLHTGKGYREVLPPVLVNSASLTGSGQLPKFAEESFRCADDDLWLTPTAEVPLTSLHRDEIIPLDQLPLRYVAYSPCFRREAGSYGRDTRGLIRLHQFNKVELYWFVHPDHADEAHAAITADAEAVLQALELPYRVLELCTGDLGFSAARTYDLEVWLAGAGAYREISSCSVCGDFQARRSSIRTKDGKTTRLVHTLNGSGLAIGRTMAALLENGQQADGSVLLPQALVPYFGSDRLQPE.

233-235 is an L-serine binding site; the sequence is TAE. 264-266 is an ATP binding site; sequence RRE. Glu-287 lines the L-serine pocket. 351-354 contacts ATP; sequence EISS. An L-serine-binding site is contributed by Ser-385.

The protein belongs to the class-II aminoacyl-tRNA synthetase family. Type-1 seryl-tRNA synthetase subfamily. Homodimer. The tRNA molecule binds across the dimer.

Its subcellular location is the cytoplasm. It catalyses the reaction tRNA(Ser) + L-serine + ATP = L-seryl-tRNA(Ser) + AMP + diphosphate + H(+). It carries out the reaction tRNA(Sec) + L-serine + ATP = L-seryl-tRNA(Sec) + AMP + diphosphate + H(+). The protein operates within aminoacyl-tRNA biosynthesis; selenocysteinyl-tRNA(Sec) biosynthesis; L-seryl-tRNA(Sec) from L-serine and tRNA(Sec): step 1/1. Catalyzes the attachment of serine to tRNA(Ser). Is also able to aminoacylate tRNA(Sec) with serine, to form the misacylated tRNA L-seryl-tRNA(Sec), which will be further converted into selenocysteinyl-tRNA(Sec). The sequence is that of Serine--tRNA ligase from Synechococcus sp. (strain WH7803).